Consider the following 521-residue polypeptide: Cytochrome P450 52A9 (521 aa).

Cysteine 468 serves as a coordination point for heme.

Belongs to the cytochrome P450 family. The cofactor is heme.

It is found in the membrane. Functionally, together with an NADPH cytochrome P450 the enzyme system catalyzes the terminal hydroxylation as the first step in the assimilation of alkanes and fatty acids. The protein is Cytochrome P450 52A9 (CYP52A9) of Candida maltosa (Yeast).